The chain runs to 597 residues: Hydrogenase-1 large chain (597 aa).

Residues Cys-76, Cys-79, Cys-576, and Cys-579 each coordinate Ni(2+).

This sequence belongs to the [NiFe]/[NiFeSe] hydrogenase large subunit family. In terms of assembly, heterodimer of a large and a small subunit. Requires Ni(2+) as cofactor.

It localises to the cell membrane. The enzyme catalyses H2 + A = AH2. In terms of biological role, this is one of three E.coli hydrogenases synthesized in response to different physiological conditions. HYD1 is believed to have a role in hydrogen cycling during fermentative growth. The polypeptide is Hydrogenase-1 large chain (hyaB) (Escherichia coli (strain K12)).